The sequence spans 185 residues: Ribosome-recycling factor (185 aa).

Belongs to the RRF family.

It localises to the cytoplasm. Functionally, responsible for the release of ribosomes from messenger RNA at the termination of protein biosynthesis. May increase the efficiency of translation by recycling ribosomes from one round of translation to another. The polypeptide is Ribosome-recycling factor (Mannheimia succiniciproducens (strain KCTC 0769BP / MBEL55E)).